Here is a 260-residue protein sequence, read N- to C-terminus: Small ribosomal subunit protein uS3 (260 aa).

Positions 39 to 114 constitute a KH type-2 domain; sequence LRQYIEQKLG…QIRINVVEVQ (76 aa). Residues 218–260 are disordered; it reads QEVATPPPSPRDRDRDRGDRDREPRRRQQQRRRQQFEDRSNEG. 2 stretches are compositionally biased toward basic and acidic residues: residues 227–243 and 251–260; these read PRDRDRDRGDRDREPRR and QQFEDRSNEG.

It belongs to the universal ribosomal protein uS3 family. Part of the 30S ribosomal subunit. Forms a tight complex with proteins S10 and S14.

Functionally, binds the lower part of the 30S subunit head. Binds mRNA in the 70S ribosome, positioning it for translation. The sequence is that of Small ribosomal subunit protein uS3 from Nostoc sp. (strain PCC 7120 / SAG 25.82 / UTEX 2576).